Here is a 311-residue protein sequence, read N- to C-terminus: Pyrimidine-specific ribonucleoside hydrolase RihA (311 aa).

Residue His240 is part of the active site.

This sequence belongs to the IUNH family. RihA subfamily.

In terms of biological role, hydrolyzes with equal efficiency cytidine or uridine to ribose and cytosine or uracil, respectively. This Escherichia coli O8 (strain IAI1) protein is Pyrimidine-specific ribonucleoside hydrolase RihA.